The following is a 392-amino-acid chain: Phosphoglycerate kinase (392 aa).

Residues 21–23 (DMN), Arg-36, 59–62 (HLGR), Arg-114, and Arg-147 contribute to the substrate site. Residues Lys-198, Glu-320, and 346-349 (GGDT) contribute to the ATP site.

Belongs to the phosphoglycerate kinase family. As to quaternary structure, monomer.

It is found in the cytoplasm. It carries out the reaction (2R)-3-phosphoglycerate + ATP = (2R)-3-phospho-glyceroyl phosphate + ADP. The protein operates within carbohydrate degradation; glycolysis; pyruvate from D-glyceraldehyde 3-phosphate: step 2/5. In Neisseria meningitidis serogroup C / serotype 2a (strain ATCC 700532 / DSM 15464 / FAM18), this protein is Phosphoglycerate kinase.